The sequence spans 412 residues: Double C2-like domain-containing protein beta (412 aa).

Residues 1–36 are negatively regulates targeting to plasma membrane; the sequence is MTLRRRGEKATISIQEHMAIDVCPGPIRPIKQISDY. The mediates interaction with DYNLT1 stretch occupies residues 1-90; it reads MTLRRRGEKA…EDVDQLFGAY (90 aa). Positions 38–123 are disordered; that stretch reads PRFPRGLPPD…PDADGYESDD (86 aa). Over residues 49–70 the composition is skewed to low complexity; the sequence is GPRAAAPPDAPARPAVAGAGRR. The segment covering 95-108 has biased composition (pro residues); that stretch reads GPSPGPSPARPPAK. A compositionally biased stretch (acidic residues) spans 112 to 123; sequence DEPDADGYESDD. 2 C2 domains span residues 126–250 and 266–399; these read ALGT…SICL and ERGR…ERWH. Ca(2+)-binding residues include Asp157, Asp163, Asp218, Asp220, Asp297, Asp303, Asp357, Asp359, and Asp365. The mediates interaction with STXBP3 stretch occupies residues 257 to 375; that stretch reads DKTEDKSLEE…FIGGVVLGIH (119 aa). The residue at position 411 (Ser411) is a Phosphoserine.

As to quaternary structure, interacts with the SNARE (soluble N-ethylmaleimide-sensitive factor attached protein receptor) complex composed of SNAP25, STX1A and VAMP2; the interaction is calcium-dependent and competitive with SYT1. Interacts with STX4; the interaction is calcium-dependent, increased by insulin and glucose, and mediates vesicle fusion with plasma membrane in pancreatic cells and adipocytes. Interacts with STXBP3; the interaction is direct, occurs at the cell membrane and regulates glucose-stimulated insulin secretion. May interact with UNC13A; the interaction mediates targeting to the plasma membrane. Interacts with cytoplasmic dynein light chain DYNLT1. The cofactor is Ca(2+). As to expression, widely expressed with highest levels in brain and kidney. Expressed in pancreatic islet cells (at protein level).

Its subcellular location is the cytoplasm. The protein localises to the cytoplasmic granule. The protein resides in the cell membrane. Its function is as follows. Calcium sensor which positively regulates SNARE-dependent fusion of vesicles with membranes. Binds phospholipids in a calcium-dependent manner and may act at the priming stage of fusion by modifying membrane curvature to stimulate fusion. Involved in calcium-triggered exocytosis in chromaffin cells and calcium-dependent spontaneous release of neurotransmitter in absence of action potentials in neuronal cells. Involved both in glucose-stimulated insulin secretion in pancreatic cells and insulin-dependent GLUT4 transport to the plasma membrane in adipocytes. The sequence is that of Double C2-like domain-containing protein beta from Homo sapiens (Human).